Consider the following 277-residue polypeptide: Release factor glutamine methyltransferase (277 aa).

S-adenosyl-L-methionine-binding positions include 117 to 121 (GTGTG), Asp-140, Trp-168, and Asn-183. Position 183–186 (183–186 (NPPY)) interacts with substrate.

This sequence belongs to the protein N5-glutamine methyltransferase family. PrmC subfamily.

The enzyme catalyses L-glutaminyl-[peptide chain release factor] + S-adenosyl-L-methionine = N(5)-methyl-L-glutaminyl-[peptide chain release factor] + S-adenosyl-L-homocysteine + H(+). Its function is as follows. Methylates the class 1 translation termination release factors RF1/PrfA and RF2/PrfB on the glutamine residue of the universally conserved GGQ motif. The sequence is that of Release factor glutamine methyltransferase from Shigella flexneri.